The sequence spans 60 residues: Large ribosomal subunit protein uL30 (60 aa).

The protein belongs to the universal ribosomal protein uL30 family. Part of the 50S ribosomal subunit.

The chain is Large ribosomal subunit protein uL30 from Carboxydothermus hydrogenoformans (strain ATCC BAA-161 / DSM 6008 / Z-2901).